A 263-amino-acid chain; its full sequence is uncharacterized protein (263 aa).

Residues 44–131 enclose the GST N-terminal domain; the sequence is QVYSLGTPNG…YLADKFNHLI (88 aa). Positions 134–263 constitute a GST C-terminal domain; sequence DWAQRTEVLN…ALEVDYKAIK (130 aa).

Belongs to the GST superfamily. Homodimer.

This is an uncharacterized protein from Streptococcus mutans serotype c (strain ATCC 700610 / UA159).